We begin with the raw amino-acid sequence, 431 residues long: MTLTLNRQLLTSRQILVAFSGGLDSTVLLHQLVQWRTENPGGALRAIHVHHGLSANADAWVTHCENVCQQWQVPLVVERVQLAQEGLGIEAQARQARYQAFARTLLPGEVLVTAQHLDDQCETFLLALKRGSGPAGLSAMAEVSEFAGTRLIRPLLARTRGELAQWALAHGLRWIEDESNQDDSYDRNFLRLRVVPLLQQRWPHFAETTARSAALCAEQESLLDELLADDLAHCQSPQGTLQIVPMLAMSDARRAAIIRRWLAGQNAPMPSRDALVRIWQEVALAREDASPCLRLGAFEIRRYQSQLWWIKSVTGQSENIVPWQTWLQPLELPAGQGSVQLNAGGDIRPPRADEAVSVRFKAPGLLHIVGRNGGRKLKKIWQELGVPPWLRDTTPLLFYGETLIAAAGGFVTQEGVAEGENGISFVWQRNA.

20–25 (SGGLDS) contributes to the ATP binding site.

This sequence belongs to the tRNA(Ile)-lysidine synthase family.

It localises to the cytoplasm. It carries out the reaction cytidine(34) in tRNA(Ile2) + L-lysine + ATP = lysidine(34) in tRNA(Ile2) + AMP + diphosphate + H(+). Its function is as follows. Ligates lysine onto the cytidine present at position 34 of the AUA codon-specific tRNA(Ile) that contains the anticodon CAU, in an ATP-dependent manner. Cytidine is converted to lysidine, thus changing the amino acid specificity of the tRNA from methionine to isoleucine. This chain is tRNA(Ile)-lysidine synthase, found in Escherichia coli O157:H7.